The chain runs to 442 residues: Tubulin beta chain (442 aa).

Positions 11, 69, 138, 142, 143, 144, 204, and 226 each coordinate GTP. Position 69 (glutamate 69) interacts with Mg(2+). Positions 421 to 442 (EYQQYQDATAEDEEEMDEEQME) are disordered. Residues 429–442 (TAEDEEEMDEEQME) show a composition bias toward acidic residues.

Belongs to the tubulin family. In terms of assembly, dimer of alpha and beta chains. A typical microtubule is a hollow water-filled tube with an outer diameter of 25 nm and an inner diameter of 15 nM. Alpha-beta heterodimers associate head-to-tail to form protofilaments running lengthwise along the microtubule wall with the beta-tubulin subunit facing the microtubule plus end conferring a structural polarity. Microtubules usually have 13 protofilaments but different protofilament numbers can be found in some organisms and specialized cells. It depends on Mg(2+) as a cofactor.

Its subcellular location is the cytoplasm. The protein localises to the cytoskeleton. Its function is as follows. Tubulin is the major constituent of microtubules, a cylinder consisting of laterally associated linear protofilaments composed of alpha- and beta-tubulin heterodimers. Microtubules grow by the addition of GTP-tubulin dimers to the microtubule end, where a stabilizing cap forms. Below the cap, tubulin dimers are in GDP-bound state, owing to GTPase activity of alpha-tubulin. The protein is Tubulin beta chain (TUBB1) of Stylonychia lemnae (Ciliate).